The following is a 142-amino-acid chain: Gonadotropin subunit beta-2 (142 aa).

Residues 1–23 form the signal peptide; that stretch reads MLGLHVGTLISLFLCILLEPIEG. 6 disulfides stabilise this stretch: Cys-29-Cys-77, Cys-43-Cys-92, Cys-46-Cys-130, Cys-54-Cys-108, Cys-58-Cys-110, and Cys-113-Cys-120. The N-linked (GlcNAc...) asparagine glycan is linked to Asn-33.

Belongs to the glycoprotein hormones subunit beta family. As to quaternary structure, heterodimer of an alpha and a beta chain.

The protein localises to the secreted. Functionally, involved in gametogenesis and steroidogenesis. This Oncorhynchus tshawytscha (Chinook salmon) protein is Gonadotropin subunit beta-2 (cgbb).